The primary structure comprises 307 residues: N-acetylmuramic acid 6-phosphate etherase (307 aa).

One can recognise an SIS domain in the interval 59-222 (TADRLRQGGR…STGVMVKLGK (164 aa)). Glu87 acts as the Proton donor in catalysis. Glu118 is a catalytic residue.

The protein belongs to the GCKR-like family. MurNAc-6-P etherase subfamily. As to quaternary structure, homodimer.

The catalysed reaction is N-acetyl-D-muramate 6-phosphate + H2O = N-acetyl-D-glucosamine 6-phosphate + (R)-lactate. Its pathway is amino-sugar metabolism; N-acetylmuramate degradation. Specifically catalyzes the cleavage of the D-lactyl ether substituent of MurNAc 6-phosphate, producing GlcNAc 6-phosphate and D-lactate. This is N-acetylmuramic acid 6-phosphate etherase from Nostoc sp. (strain PCC 7120 / SAG 25.82 / UTEX 2576).